The primary structure comprises 308 residues: UDP-N-acetylenolpyruvoylglucosamine reductase (308 aa).

Residues 32 to 197 enclose the FAD-binding PCMH-type domain; that stretch reads QTGGKADYYL…LEAAFTLAPG (166 aa). Residue Arg-176 is part of the active site. Catalysis depends on Ser-226, which acts as the Proton donor. Glu-296 is an active-site residue.

It belongs to the MurB family. It depends on FAD as a cofactor.

The protein localises to the cytoplasm. The catalysed reaction is UDP-N-acetyl-alpha-D-muramate + NADP(+) = UDP-N-acetyl-3-O-(1-carboxyvinyl)-alpha-D-glucosamine + NADPH + H(+). It participates in cell wall biogenesis; peptidoglycan biosynthesis. Cell wall formation. The polypeptide is UDP-N-acetylenolpyruvoylglucosamine reductase (Staphylococcus saprophyticus subsp. saprophyticus (strain ATCC 15305 / DSM 20229 / NCIMB 8711 / NCTC 7292 / S-41)).